The chain runs to 378 residues: Anhydro-N-acetylmuramic acid kinase (378 aa).

Position 9–16 (9–16 (GTSVDGID)) interacts with ATP.

Belongs to the anhydro-N-acetylmuramic acid kinase family.

It carries out the reaction 1,6-anhydro-N-acetyl-beta-muramate + ATP + H2O = N-acetyl-D-muramate 6-phosphate + ADP + H(+). It participates in amino-sugar metabolism; 1,6-anhydro-N-acetylmuramate degradation. The protein operates within cell wall biogenesis; peptidoglycan recycling. In terms of biological role, catalyzes the specific phosphorylation of 1,6-anhydro-N-acetylmuramic acid (anhMurNAc) with the simultaneous cleavage of the 1,6-anhydro ring, generating MurNAc-6-P. Is required for the utilization of anhMurNAc either imported from the medium or derived from its own cell wall murein, and thus plays a role in cell wall recycling. In Microcystis aeruginosa (strain NIES-843 / IAM M-2473), this protein is Anhydro-N-acetylmuramic acid kinase.